The chain runs to 225 residues: Uracil-DNA glycosylase (225 aa).

Asp65 (proton acceptor) is an active-site residue.

It belongs to the uracil-DNA glycosylase (UDG) superfamily. UNG family.

The protein localises to the cytoplasm. It carries out the reaction Hydrolyzes single-stranded DNA or mismatched double-stranded DNA and polynucleotides, releasing free uracil.. Its function is as follows. Excises uracil residues from the DNA which can arise as a result of misincorporation of dUMP residues by DNA polymerase or due to deamination of cytosine. The polypeptide is Uracil-DNA glycosylase (Bacillus cereus (strain B4264)).